Reading from the N-terminus, the 259-residue chain is 5'-nucleotidase SurE (259 aa).

A divalent metal cation contacts are provided by aspartate 8, aspartate 9, serine 41, and asparagine 99.

It belongs to the SurE nucleotidase family. Requires a divalent metal cation as cofactor.

It is found in the cytoplasm. The enzyme catalyses a ribonucleoside 5'-phosphate + H2O = a ribonucleoside + phosphate. Functionally, nucleotidase that shows phosphatase activity on nucleoside 5'-monophosphates. The chain is 5'-nucleotidase SurE from Synechococcus sp. (strain JA-3-3Ab) (Cyanobacteria bacterium Yellowstone A-Prime).